Reading from the N-terminus, the 614-residue chain is Vitamin B12 transporter BtuB (614 aa).

The N-terminal stretch at 1-20 is a signal peptide; the sequence is MIKKASLLTACSVTAFSAWA. The short motif at 26–33 is the TonB box element; sequence DTLVVTAN. In terms of domain architecture, TBDR plug spans 38 to 152; sequence PRSTVLAPTT…IGGVVNIITT (115 aa). Cyanocob(III)alamin contacts are provided by residues L83, S85, N92, and 110 to 111; that span reads VS. The 460-residue stretch at 155-614 folds into the TBDR beta-barrel domain; that stretch reads HPGTEISAGW…EYTLSGSYTF (460 aa). 3 beta stranded membrane-spanning segments follow: residues 158–165, 169–178, and 184–195; these read TEISAGWG, YQNYDVSTQQ, and TRVTLLGDYAHT. Ca(2+)-binding residues include D199, Q211, D213, and D215. Transmembrane regions (beta stranded) follow at residues 217-227 and 232-248; these read FLSKTLYGALE and DVWS…NRTN. The Ca(2+) site is built by Y249 and D250. A251 is a binding site for cyanocob(III)alamin. Ca(2+) is bound at residue D261. Transmembrane regions (beta stranded) follow at residues 263–277, 279–296, 309–325, 328–337, 353–369, 371–381, 385–400, 403–417, 434–443, 449–458, 473–490, 494–509, 517–529, and 535–550; these read RKLY…LRYN, ELIK…KDYN, TLDE…NNII, HGNIGAGVDW, YDQR…QQVG, FTFEGAGRSDD, FGRH…WEFI, YRFI…KAPN, KSKQWEGAFE, VNWRISGYRN, YYNE…TANF, PLTH…ARNA, RRAK…QLDW, and DWGI…YDKD. T309 lines the cyanocob(III)alamin pocket. R517 lines the cyanocob(III)alamin pocket. Cyanocob(III)alamin is bound at residue Y551. 3 beta stranded membrane passes run 558–572, 585–596, and 602–614; these read TVKM…LAVA, IANLFDKDYETV, and AGRE…SYTF. The TonB C-terminal box motif lies at 597–614; that stretch reads YGYQTAGREYTLSGSYTF.

The protein belongs to the TonB-dependent receptor family. BtuB (TC 1.B.14.3.1) subfamily.

The protein resides in the cell outer membrane. Its function is as follows. Involved in the active translocation of vitamin B12 (cyanocobalamin) across the outer membrane to the periplasmic space. It derives its energy for transport by interacting with the trans-periplasmic membrane protein TonB. The sequence is that of Vitamin B12 transporter BtuB from Escherichia coli O6:K15:H31 (strain 536 / UPEC).